The chain runs to 325 residues: Histone deacetylase 8 (325 aa).

The tract at residues methionine 1–glycine 272 is histone deacetylase. Residue aspartate 49 participates in substrate binding. Histidine 91 functions as the Proton acceptor in the catalytic mechanism. A substrate-binding site is contributed by glycine 99. A divalent metal cation-binding residues include aspartate 126, histidine 128, and aspartate 215. Tyrosine 254 is a binding site for substrate.

This sequence belongs to the histone deacetylase family. HD type 1 subfamily. A divalent metal cation is required as a cofactor.

Its subcellular location is the nucleus. The protein localises to the chromosome. It is found in the cytoplasm. It catalyses the reaction N(6)-acetyl-L-lysyl-[histone] + H2O = L-lysyl-[histone] + acetate. The enzyme catalyses N(6)-acetyl-L-lysyl-[protein] + H2O = L-lysyl-[protein] + acetate. The catalysed reaction is N(6)-(2E)-butenoyl-L-lysyl-[protein] + H2O = (2E)-2-butenoate + L-lysyl-[protein]. Its activity is inhibited by trichostatin A (TSA) and butyrate, 2 well known histone deacetylase inhibitors. In terms of biological role, histone deacetylase that catalyzes the deacetylation of lysine residues on the N-terminal part of the core histones (H2A, H2B, H3 and H4). Histone deacetylation gives a tag for epigenetic repression and plays an important role in transcriptional regulation, cell cycle progression and developmental events. Histone deacetylases act via the formation of large multiprotein complexes. Also involved in the deacetylation of non-histone proteins. In addition to protein deacetylase activity, also has protein-lysine deacylase activity: acts as a protein decrotonylase by mediating decrotonylation ((2E)-butenoyl) of histones. This Xenopus laevis (African clawed frog) protein is Histone deacetylase 8 (hdac8).